The chain runs to 430 residues: Proteinase-activated receptor 1 (430 aa).

The N-terminal stretch at 1 to 21 (MGPRRLLIVALGLSLCGPLLS) is a signal peptide. Positions 22 to 41 (SRVPMSQPESERTDATVNPR) are cleaved as a propeptide — removed for receptor activation. Residues 42 to 107 (SFFLRNPSEN…SGYLTSPWLT (66 aa)) are Extracellular-facing. N-linked (GlcNAc...) asparagine glycosylation is found at Asn67 and Asn80. Residues 108–133 (LFMPSVYTIVFIVSLPLNVLAIAVFV) traverse the membrane as a helical segment. Over 134-142 (LRMKVKKPA) the chain is Cytoplasmic. Residues 143–162 (VVYMLHLAMADVLFVSVLPF) form a helical membrane-spanning segment. Over 163–181 (KISYYFSGTDWQFGSGMCR) the chain is Extracellular. An intrachain disulfide couples Cys180 to Cys259. A helical transmembrane segment spans residues 182-203 (FATAAFYGNMYASIMLMTVISI). The Cytoplasmic segment spans residues 204-223 (DRFLAVVYPIQSLSWRTLGR). Residues 224-244 (ANFTCVVIWVMAIMGVVPLLL) traverse the membrane as a helical segment. At 245-273 (KEQTTRVPGLNITTCHDVLSENLMQGFYS) the chain is on the extracellular side. A glycan (N-linked (GlcNAc...) asparagine) is linked at Asn255. Residues 274 to 293 (YYFSAFSAIFFLVPLIVSTV) form a helical membrane-spanning segment. At 294–316 (CYTSIIRCLSSSAVANRSKKSRA) the chain is on the cytoplasmic side. The chain crosses the membrane as a helical span at residues 317-339 (LFLSAAVFCIFIVCFGPTNVLLI). Residues 340 to 354 (VHYLFLSDSPGTEAA) are Extracellular-facing. A helical transmembrane segment spans residues 355 to 379 (YFAYLLCVCVSSVSCCIDPLIYYYA). The Cytoplasmic segment spans residues 380–430 (SSECQRHLYSILCCKESSDPNSCNSTGQLMPSKMDTCSSHLNNSIYKKLLA). Ser423 carries the phosphoserine modification.

This sequence belongs to the G-protein coupled receptor 1 family. Proteolytic cleavage by thrombin generates a new N-terminus that functions as a tethered ligand. Also proteolytically cleaved by cathepsin CTSG. In terms of processing, phosphorylated in the C-terminal tail; probably mediating desensitization prior to the uncoupling and internalization of the receptor.

The protein localises to the cell membrane. Its function is as follows. High affinity receptor that binds the activated thrombin, leading to calcium release from intracellular stores. The thrombin-activated receptor signaling pathway is mediated through PTX-insensitive G proteins, activation of phospholipase C resulting in the production of 1D-myo-inositol 1,4,5-trisphosphate (InsP3) which binds to InsP3 receptors causing calcium release from the stores. In astrocytes, the calcium released into the cytosol allows the Ca(2+)-dependent release of L-glutamate into the synaptic cleft through BEST1, that targets the neuronal postsynaptic GRIN2A/NMDAR receptor resulting in the synaptic plasticity regulation. May play a role in platelets activation and in vascular development. Mediates up-regulation of pro-inflammatory cytokines, such as MCP-1/CCL2 and IL6, triggered by coagulation factor Xa (F10) in cardiac fibroblasts and umbilical vein endothelial cells. This Mus musculus (Mouse) protein is Proteinase-activated receptor 1.